The primary structure comprises 534 residues: Cytochrome P450 78A9 (534 aa).

The chain crosses the membrane as a helical span at residues 26 to 46 (LALSLLVASLASLALSLFFWS). Cysteine 474 is a heme binding site.

It belongs to the cytochrome P450 family. Heme is required as a cofactor. In terms of tissue distribution, expressed in the funiculus of developing ovules.

The protein localises to the membrane. In terms of biological role, plays a role in seed and fruit development. Functions probably in association with CYP78A6 in the regulation of seed growth. The polypeptide is Cytochrome P450 78A9 (CYP78A9) (Arabidopsis thaliana (Mouse-ear cress)).